The chain runs to 447 residues: Putative bacteriocin-SkfA transport system permease protein SkfF (447 aa).

Over 1–3 (MPF) the chain is Cytoplasmic. Residues 4-22 (LIMLLFVGAIGFQVSFVSR) form a helical membrane-spanning segment. The Extracellular segment spans residues 23-29 (STTWDMS). Residues 30–50 (IAGWVLTGVFILYTAFGLFSN) form a helical membrane-spanning segment. Residues 51–59 (RLPSQMADI) lie on the Cytoplasmic side of the membrane. A helical transmembrane segment spans residues 60–80 (IWLYGTATSFSKVVYSVLFFS). Over 81-85 (VTWKA) the chain is Extracellular. A helical transmembrane segment spans residues 86 to 104 (LLWIISAIFGDVLIVLLSG). Residues 105–113 (DHINLLGRS) are Cytoplasmic-facing. Residues 114–134 (IIFVGLFFIAEVWLMSVSCAR) form a helical membrane-spanning segment. Over 135–141 (TVKKMKR) the chain is Extracellular. Residues 142 to 160 (VYVLVFLLMLGIYSICLYR) form a helical membrane-spanning segment. Residues 161-189 (FFFLQHSSGIWESIARFISGVGLVFDTLS) lie on the Cytoplasmic side of the membrane. A helical transmembrane segment spans residues 190-208 (PLYVVVFIGIITVSFMTIA). Residues 209–247 (FTSRQVEMKESLVKEAEFWEEFQERQFGSGQIIQKPKTT) are Extracellular-facing. Residues 248–268 (WWGLQGLNGIWSFLWLELLLF) traverse the membrane as a helical segment. The Cytoplasmic portion of the chain corresponds to 269-297 (KKYLFFHSIHTVMLSGVFYVVIFMYPEWF). Residues 298-318 (YLLFFLIVSAVMLSSYYSGIV) traverse the membrane as a helical segment. Residues 319-341 (RHSQSGTLHLFPGALWKKIIILE) are Extracellular-facing. The chain crosses the membrane as a helical span at residues 342–360 (LTNTVWLYILYCVSITFMA). The Cytoplasmic segment spans residues 361-363 (VGN). The chain crosses the membrane as a helical span at residues 364–382 (LVYWYIYGLGIYIWFMTIR). At 383 to 404 (LFAFTHTNRNDIKLSLPQYYKS) the chain is on the extracellular side. A helical membrane pass occupies residues 405 to 423 (FFMALGLSGICLYVIHLLT). The Cytoplasmic portion of the chain corresponds to 424 to 426 (ADW). Residues 427 to 447 (YTLVVVVCIGSLSWCLFYRFR) traverse the membrane as a helical segment.

The protein resides in the cell membrane. Its function is as follows. Probably part of the ABC transporter SkfEF involved in the export of the bacteriocin SKF. Probably responsible for the translocation of bacteriocin SkfA across the membrane. This is Putative bacteriocin-SkfA transport system permease protein SkfF from Bacillus subtilis (strain 168).